A 129-amino-acid chain; its full sequence is MTCTLRWTITALVLLGICHLARPAFRTKCGRYSYCWIPYDIERDRYDNGDKKCCFCRNAWSPWQCKEDERYEWLRCGHKFYYMCCYTDDDNGNGNGNGNGFNYLKSLYGGYGNGNGEFWEEYIDERYDK.

The N-terminal stretch at 1–23 is a signal peptide; the sequence is MTCTLRWTITALVLLGICHLARP. Tandem repeats lie at residues 91 to 92, 93 to 94, 95 to 96, 97 to 98, and 99 to 100. A 5 X 2 AA tandem repeats of N-G region spans residues 91-100; it reads NGNGNGNGNG.

The protein belongs to the N16 matrix protein family. In terms of assembly, heterooligomer; disulfide-linked. Pif97, Pif80, N16 and other proteins form a complex. In terms of tissue distribution, component of conchiolin, the organic matrix of nacre. Specifically expressed in mantle epithelium.

It localises to the secreted. The protein localises to the extracellular space. The protein resides in the extracellular matrix. In terms of biological role, may be specifically involved in the formation of the nacreous layer. In Pinctada fucata (Akoya pearl oyster), this protein is N16.5 matrix protein.